Here is a 397-residue protein sequence, read N- to C-terminus: S-adenosylmethionine synthase (397 aa).

His-16 contributes to the ATP binding site. Residue Asp-18 participates in Mg(2+) binding. Glu-44 provides a ligand contact to K(+). L-methionine is bound by residues Glu-57 and Gln-100. The flexible loop stretch occupies residues Gln-100–Glu-110. ATP is bound by residues Asp-175–Lys-177, Arg-242–Phe-243, Asp-251, Arg-257–Lys-258, Ala-274, and Lys-278. Asp-251 lines the L-methionine pocket. Lys-282 contributes to the L-methionine binding site.

It belongs to the AdoMet synthase family. As to quaternary structure, homotetramer; dimer of dimers. Mg(2+) serves as cofactor. It depends on K(+) as a cofactor.

Its subcellular location is the cytoplasm. It carries out the reaction L-methionine + ATP + H2O = S-adenosyl-L-methionine + phosphate + diphosphate. Its pathway is amino-acid biosynthesis; S-adenosyl-L-methionine biosynthesis; S-adenosyl-L-methionine from L-methionine: step 1/1. Catalyzes the formation of S-adenosylmethionine (AdoMet) from methionine and ATP. The overall synthetic reaction is composed of two sequential steps, AdoMet formation and the subsequent tripolyphosphate hydrolysis which occurs prior to release of AdoMet from the enzyme. This Streptococcus thermophilus (strain CNRZ 1066) protein is S-adenosylmethionine synthase.